Reading from the N-terminus, the 501-residue chain is Prostacyclin synthase (501 aa).

The chain crosses the membrane as a helical span at residues 1–21; the sequence is MSWAALLGLLAVLLLLLLLLS. Substrate is bound by residues R107, L113, N288, 359 to 360, and R383; that span reads TR. A heme-binding site is contributed by C442.

This sequence belongs to the cytochrome P450 family. Requires heme as cofactor.

Its subcellular location is the endoplasmic reticulum membrane. It catalyses the reaction prostaglandin H2 = prostaglandin I2. The enzyme catalyses a hydroperoxyeicosatetraenoate = an oxoeicosatetraenoate + H2O. It carries out the reaction (15S)-hydroperoxy-(5Z,8Z,11Z,13E)-eicosatetraenoate = 15-oxo-(5Z,8Z,11Z,13E)-eicosatetraenoate + H2O. The catalysed reaction is (15S)-hydroperoxy-(5Z,8Z,11Z,13E)-eicosatetraenoate + AH2 = (15S)-hydroxy-(5Z,8Z,11Z,13E)-eicosatetraenoate + A + H2O. In terms of biological role, catalyzes the biosynthesis and metabolism of eicosanoids. Catalyzes the isomerization of prostaglandin H2 to prostacyclin (= prostaglandin I2), a potent mediator of vasodilation and inhibitor of platelet aggregation. Additionally, displays dehydratase activity, toward hydroperoxyeicosatetraenoates (HPETEs), especially toward (15S)-hydroperoxy-(5Z,8Z,11Z,13E)-eicosatetraenoate (15(S)-HPETE). The protein is Prostacyclin synthase (Ptgis) of Rattus norvegicus (Rat).